Consider the following 321-residue polypeptide: Cytochrome c biogenesis protein CcsA (321 aa).

Helical transmembrane passes span 9 to 29 (ILTH…LMTL), 44 to 64 (GLIA…IYSG), 71 to 91 (LYES…VPYF), 97 to 117 (LLST…TSGL), 143 to 163 (MILS…LLVI), 227 to 247 (VISL…VWAN), 261 to 275 (TWAF…IYLH), and 288 to 308 (AIVA…VNLL).

Belongs to the CcmF/CycK/Ccl1/NrfE/CcsA family. As to quaternary structure, may interact with Ccs1.

The protein resides in the plastid. It localises to the chloroplast thylakoid membrane. Functionally, required during biogenesis of c-type cytochromes (cytochrome c6 and cytochrome f) at the step of heme attachment. The protein is Cytochrome c biogenesis protein CcsA of Nandina domestica (Heavenly bamboo).